An 806-amino-acid chain; its full sequence is GPI ethanolamine phosphate transferase 2 (806 aa).

N-linked (GlcNAc...) asparagine glycans are attached at residues Asn70, Asn184, and Asn242. 3 helical membrane passes run 396–416 (MLFL…YCYI), 425–445 (SVLM…SSFV), and 451–471 (IWWW…PSCT). Asn488 carries N-linked (GlcNAc...) asparagine glycosylation. 8 consecutive transmembrane segments (helical) span residues 508 to 528 (PSIK…DGFT), 532 to 552 (LLSI…TCWA), 593 to 613 (LFFK…VVFA), 624 to 644 (LFTI…FLVF), 664 to 684 (CEMF…QFGG), 706 to 726 (IYVV…YWSL), 745 to 765 (LSSM…CICM), and 782 to 804 (LLGW…LLMV).

The protein belongs to the PIGG/PIGN/PIGO family. PIGG subfamily.

It localises to the endoplasmic reticulum membrane. The protein operates within glycolipid biosynthesis; glycosylphosphatidylinositol-anchor biosynthesis. In terms of biological role, ethanolamine phosphate transferase involved in glycosylphosphatidylinositol-anchor biosynthesis. Transfers ethanolamine phosphate to the GPI second mannose. The sequence is that of GPI ethanolamine phosphate transferase 2 (LAS21) from Eremothecium gossypii (strain ATCC 10895 / CBS 109.51 / FGSC 9923 / NRRL Y-1056) (Yeast).